Reading from the N-terminus, the 64-residue chain is uncharacterized protein (64 aa).

In terms of tissue distribution, widely expressed; not found in breast.

This is an uncharacterized protein from Homo sapiens (Human).